The sequence spans 579 residues: Proteasome-associated ATPase (579 aa).

Residues 1-21 (MPRDETPEREHAEQQSRQALE) form a disordered region. The stretch at 8–86 (EREHAEQQSR…REEVEKLTQP (79 aa)) forms a coiled coil. 268–273 (GCGKTL) is a binding site for ATP. The interval 578 to 579 (YL) is docks into pockets in the proteasome alpha-ring.

Belongs to the AAA ATPase family. In terms of assembly, homohexamer. Assembles into a hexameric ring structure that caps the 20S proteasome core. Strongly interacts with the prokaryotic ubiquitin-like protein Pup through a hydrophobic interface; the interacting region of ARC lies in its N-terminal coiled-coil domain. There is one Pup binding site per ARC hexamer ring. Upon ATP-binding, the C-terminus of ARC interacts with the alpha-rings of the proteasome core, possibly by binding to the intersubunit pockets.

It functions in the pathway protein degradation; proteasomal Pup-dependent pathway. Its function is as follows. ATPase which is responsible for recognizing, binding, unfolding and translocation of pupylated proteins into the bacterial 20S proteasome core particle. May be essential for opening the gate of the 20S proteasome via an interaction with its C-terminus, thereby allowing substrate entry and access to the site of proteolysis. Thus, the C-termini of the proteasomal ATPase may function like a 'key in a lock' to induce gate opening and therefore regulate proteolysis. The protein is Proteasome-associated ATPase of Acidimicrobium ferrooxidans (strain DSM 10331 / JCM 15462 / NBRC 103882 / ICP).